The chain runs to 350 residues: MKFDVLFGGVSFEHEISIVSAVALKKVLGESIGNFIFLDSSHRFYLIPLDSMKSKLFSSGDYKKCTEIFLQRGAFVKKTFFGFKPIIPHTLINLIHGADGEDGSVSALLDFYHLPFIGPRIESSVMSFNKVFTKIFAAQRGVKVLDYEILTRANPHLKHIAYPIILKPARLGSSIGVSVINEEKELDYGRDLAFEYDDTIIAESFKSGVKEYNLAGCRVKNGSQDEYRFSIIEEPSKKELLDFERKYLDFSRTAQVLQADISSALVAKLQENFMKLYENAFEGALIRCDFFVIDDEVYLNEINPIPGSMANYLFEDFVGVLTELAYNLPKKHSIKVSYKYIEQIHYAKGK.

The region spanning 134-337 (KIFAAQRGVK…LPKKHSIKVS (204 aa)) is the ATP-grasp domain. Residue 160 to 212 (IAYPIILKPARLGSSIGVSVINEEKELDYGRDLAFEYDDTIIAESFKSGVKEY) coordinates ATP. Mg(2+) contacts are provided by aspartate 289, glutamate 301, and asparagine 303.

Belongs to the D-alanine--D-alanine ligase family. Mg(2+) serves as cofactor. The cofactor is Mn(2+).

The protein resides in the cytoplasm. The enzyme catalyses 2 D-alanine + ATP = D-alanyl-D-alanine + ADP + phosphate + H(+). The protein operates within cell wall biogenesis; peptidoglycan biosynthesis. Its function is as follows. Cell wall formation. This Helicobacter hepaticus (strain ATCC 51449 / 3B1) protein is D-alanine--D-alanine ligase.